A 241-amino-acid polypeptide reads, in one-letter code: Fatty acid metabolism regulator protein (241 aa).

The 69-residue stretch at 11–79 (QSPAGLAEEY…HGKPTKVNNI (69 aa)) folds into the HTH gntR-type domain. Residues 39–58 (ERELAEKIGVTRTTLREVLQ) constitute a DNA-binding region (H-T-H motif).

In terms of assembly, homodimer.

It is found in the cytoplasm. Functionally, multifunctional regulator of fatty acid metabolism. This is Fatty acid metabolism regulator protein from Pasteurella multocida (strain Pm70).